The following is a 333-amino-acid chain: Phosphate acyltransferase (333 aa).

Belongs to the PlsX family. In terms of assembly, homodimer. Probably interacts with PlsY.

It is found in the cytoplasm. It carries out the reaction a fatty acyl-[ACP] + phosphate = an acyl phosphate + holo-[ACP]. It participates in lipid metabolism; phospholipid metabolism. Functionally, catalyzes the reversible formation of acyl-phosphate (acyl-PO(4)) from acyl-[acyl-carrier-protein] (acyl-ACP). This enzyme utilizes acyl-ACP as fatty acyl donor, but not acyl-CoA. The sequence is that of Phosphate acyltransferase from Clostridium beijerinckii (strain ATCC 51743 / NCIMB 8052) (Clostridium acetobutylicum).